We begin with the raw amino-acid sequence, 1328 residues long: 5'-3' exoribonuclease 1 (1328 aa).

The tract at residues 1211 to 1328 (AGKNRKTNVS…VQPMGKLQIN (118 aa)) is disordered. Polar residues predominate over residues 1217–1231 (TNVSANNVSQGTDSR). The span at 1275–1286 (HKSKSKFSKGNH) shows a compositional bias: basic residues.

Belongs to the 5'-3' exonuclease family. As to quaternary structure, monomer. The cofactor is Mg(2+).

Its subcellular location is the cytoplasm. The protein resides in the perinuclear region. It is found in the P-body. Strand exchange activity is enhanced by fatty acid synthase (stimulatory factor P190/210). In terms of biological role, multifunctional protein that exhibits several independent functions at different levels of the cellular processes. 5'-3' exonuclease component of the nonsense-mediated mRNA decay (NMD) which is a highly conserved mRNA degradation pathway, an RNA surveillance system whose role is to identify and rid cells of mRNA with premature termination codons and thus prevents accumulation of potentially harmful truncated proteins. Involved in the degradation of several hypomodified mature tRNA species and participates in the 5'-processing or the degradation of the snoRNA precursors and rRNA processing. In Schizosaccharomyces pombe (strain 972 / ATCC 24843) (Fission yeast), this protein is 5'-3' exoribonuclease 1 (exo2).